The sequence spans 769 residues: Discoidin, CUB and LCCL domain-containing protein 2 (769 aa).

Over residues 1-29 the composition is skewed to low complexity; the sequence is MASRAPLRAARSPQDPGGRAAPAATGRAP. Positions 1 to 39 are disordered; the sequence is MASRAPLRAARSPQDPGGRAAPAATGRAPLPSAGWCPLP. The signal sequence occupies residues 1-63; sequence MASRAPLRAA…LLLLLPDAGA (63 aa). Residues 64 to 523 are Extracellular-facing; that stretch reads QKGDGCGHTV…VTPSVTKDVA (460 aa). 2 disulfide bridges follow: C69-C96 and C123-C145. The CUB domain maps to 69 to 184; sequence CGHTVLGPES…RGFLASYSVI (116 aa). N-linked (GlcNAc...) asparagine glycosylation occurs at N92. N-linked (GlcNAc...) asparagine glycosylation is present at N152. The LCCL domain occupies 184–282; sequence IDKQDLITCL…MVGYLSTSLF (99 aa). An intrachain disulfide couples C212 to C234. The N-linked (GlcNAc...) asparagine glycan is linked to N269. An intrachain disulfide couples C289 to C446. The region spanning 289–446 is the F5/8 type C domain; sequence CYGTLGMESG…IAMKVELLGC (158 aa). Residues 455–476 form a disordered region; sequence PKLTQPPPPRNSNNLKNTTVHP. The span at 465 to 474 shows a compositional bias: polar residues; the sequence is NSNNLKNTTV. Residues N471 and N511 are each glycosylated (N-linked (GlcNAc...) asparagine). The helical transmembrane segment at 524 to 544 threads the bilayer; sequence LAAVLVPVLVMALTTLILILV. Residues 545 to 769 lie on the Cytoplasmic side of the membrane; it reads CAWHWRNRKK…EKFDAFKETL (225 aa). S601 is modified (phosphoserine). Residues 719–769 form a disordered region; it reads SCSSGQAQYDTPKGGKPAAAPEELVYQVPQSTQEASGAGRDEKFDAFKETL. Residues 757–769 are compositionally biased toward basic and acidic residues; sequence GRDEKFDAFKETL.

Its subcellular location is the membrane. The sequence is that of Discoidin, CUB and LCCL domain-containing protein 2 (Dcbld2) from Rattus norvegicus (Rat).